The sequence spans 209 residues: Ribonuclease HII (209 aa).

Residues 6–209 enclose the RNase H type-2 domain; sequence SLEAGIDEAG…IKRMTNSRLF (204 aa). Positions 12, 13, and 108 each coordinate a divalent metal cation.

It belongs to the RNase HII family. It depends on Mn(2+) as a cofactor. The cofactor is Mg(2+).

It localises to the cytoplasm. It catalyses the reaction Endonucleolytic cleavage to 5'-phosphomonoester.. In terms of biological role, endonuclease that specifically degrades the RNA of RNA-DNA hybrids. The polypeptide is Ribonuclease HII (Caldivirga maquilingensis (strain ATCC 700844 / DSM 13496 / JCM 10307 / IC-167)).